The sequence spans 255 residues: uncharacterized protein (255 aa).

This is an uncharacterized protein from Methanocaldococcus jannaschii (strain ATCC 43067 / DSM 2661 / JAL-1 / JCM 10045 / NBRC 100440) (Methanococcus jannaschii).